Consider the following 421-residue polypeptide: CinA-like protein (421 aa).

It belongs to the CinA family.

The polypeptide is CinA-like protein (Mycobacterium sp. (strain MCS)).